We begin with the raw amino-acid sequence, 339 residues long: Dipeptide transport system permease protein DppB (339 aa).

Residues 1–9 (MLQFILRRL) are Periplasmic-facing. Residues 10-30 (GLVIPTFIGITLLTFAFVHMI) traverse the membrane as a helical segment. Over 31 to 102 (PGDPVMIMAG…VPRFQATLEL (72 aa)) the chain is Cytoplasmic. The ABC transmembrane type-1 domain occupies 96–328 (FQATLELGVC…LVNLLVDLLY (233 aa)). The chain crosses the membrane as a helical span at residues 103–123 (GVCAMIFATAVGIPVGVLAAV). Topologically, residues 124–135 (KRGSIFDHTAVG) are periplasmic. The helical transmembrane segment at 136 to 156 (LALTGYSMPIFWWGMMLIMLV) threads the bilayer. Residues 157–171 (SVHWNLTPVSGRVSD) are Cytoplasmic-facing. A helical membrane pass occupies residues 172-192 (MVFLDDSNPLTGFMLIDTAIW). Over 193–200 (GEDGNFID) the chain is Periplasmic. Residues 201–221 (AVAHMILPAIVLGTIPLAVIV) form a helical membrane-spanning segment. The Cytoplasmic portion of the chain corresponds to 222–259 (RMTRSSMLEVLGEDYIRTARAKGLTRMRVIIVHALRNA). A helical membrane pass occupies residues 260 to 280 (MLPVVTVIGLQVGTLLAGAIL). The Periplasmic segment spans residues 281 to 309 (TETIFSWPGLGRWLIDALQRRDYPVVQGG). The helical transmembrane segment at 310–330 (VLLVATMIILVNLLVDLLYGV) threads the bilayer. Over 331 to 339 (VNPRIRHKK) the chain is Cytoplasmic.

The protein belongs to the binding-protein-dependent transport system permease family. OppBC subfamily. In terms of assembly, the complex is composed of two ATP-binding proteins (DppD and DppF), two transmembrane proteins (DppB and DppC) and a solute-binding protein (DppA).

It is found in the cell inner membrane. In terms of biological role, part of the ABC transporter DppABCDF involved in dipeptide transport. Responsible for the translocation of the substrate across the membrane. In Escherichia coli O157:H7, this protein is Dipeptide transport system permease protein DppB (dppB).